The sequence spans 407 residues: BRCA1-A complex subunit Abraxas 1 (407 aa).

An MPN domain is found at 7–155 (LGVLSGFVLG…THCLEHALYK (149 aa)). At Ser-48 the chain carries Phosphoserine. Positions 209–259 (LKEVHKINEMYAAVQEELKSICQKVEQSEREVEKLLMDVNQLKEVRRTQQA) form a coiled coil. A disordered region spans residues 344–407 (KRKALDTHDQ…DADYPRSPTF (64 aa)). The span at 347 to 366 (ALDTHDQGSVKRPRLLETES) shows a compositional bias: basic and acidic residues. 4 positions are modified to phosphoserine: Ser-384, Ser-385, Ser-394, and Ser-404. Residues 388–399 (IDIEMGSPEDDA) show a composition bias toward acidic residues. The pSXXF motif motif lies at 404 to 407 (SPTF).

The protein belongs to the FAM175 family. Abraxas subfamily. In terms of assembly, component of the ARISC complex, at least composed of UIMC1/RAP80, ABRAXAS1, BRCC3/BRCC36, BABAM2 and BABAM1/NBA1. Component of the BRCA1-A complex, at least composed of the BRCA1, BARD1, UIMC1/RAP80, ABRAXAS1, BRCC3/BRCC36, BABAM2 and BABAM1/NBA1. In the complex, interacts directly with UIMC1/RAP80, BRCC3/BRCC36 and BABAM2. Homodimer. Interacts directly (when phosphorylated at Ser-404) with BRCA1. The phosphorylated homodimer can interact directly with two BRCA1 chains, giving rise to a heterotetramer. Binds polyubiquitin. Post-translationally, phosphorylation of Ser-404 of the pSXXF motif by ATM or ATR constitutes a specific recognition motif for the BRCT domain of BRCA1.

Its subcellular location is the nucleus. Involved in DNA damage response and double-strand break (DSB) repair. Component of the BRCA1-A complex, acting as a central scaffold protein that assembles the various components of the complex and mediates the recruitment of BRCA1. The BRCA1-A complex specifically recognizes 'Lys-63'-linked ubiquitinated histones H2A and H2AX at DNA lesion sites, leading to target the BRCA1-BARD1 heterodimer to sites of DNA damage at DSBs. This complex also possesses deubiquitinase activity that specifically removes 'Lys-63'-linked ubiquitin on histones H2A and H2AX. This Mus musculus (Mouse) protein is BRCA1-A complex subunit Abraxas 1.